The chain runs to 262 residues: uncharacterized protein (262 aa).

Belongs to the BtpA family.

This is an uncharacterized protein from Pyrococcus furiosus (strain ATCC 43587 / DSM 3638 / JCM 8422 / Vc1).